A 343-amino-acid polypeptide reads, in one-letter code: Twinfilin (343 aa).

ADF-H domains lie at 11–135 and 184–312; these read EQLA…EGYR and EATV…DELH. Positions 319 to 343 are disordered; sequence RPAFAKPKGPPNRGAKRLTRPTAED.

This sequence belongs to the actin-binding proteins ADF family. Twinfilin subfamily. Interacts with G-actin; ADP-actin form.

Its subcellular location is the cytoplasm. The protein resides in the cytoskeleton. The protein localises to the cell cortex. In terms of biological role, actin-binding protein involved in motile and morphological processes. Inhibits actin polymerization, likely by sequestering G-actin. The sequence is that of Twinfilin (twf) from Drosophila melanogaster (Fruit fly).